A 427-amino-acid polypeptide reads, in one-letter code: 3-phosphoshikimate 1-carboxyvinyltransferase (427 aa).

3 residues coordinate 3-phosphoshikimate: Lys22, Ser23, and Arg27. Lys22 serves as a coordination point for phosphoenolpyruvate. Residues Gly96 and Arg124 each contribute to the phosphoenolpyruvate site. Residues Ser169, Ser170, Gln171, Ser197, Asp313, Asn336, and Lys340 each contribute to the 3-phosphoshikimate site. Gln171 serves as a coordination point for phosphoenolpyruvate. The active-site Proton acceptor is the Asp313. Residues Arg344, Arg386, and Lys411 each coordinate phosphoenolpyruvate.

It belongs to the EPSP synthase family. Monomer.

The protein resides in the cytoplasm. It catalyses the reaction 3-phosphoshikimate + phosphoenolpyruvate = 5-O-(1-carboxyvinyl)-3-phosphoshikimate + phosphate. The protein operates within metabolic intermediate biosynthesis; chorismate biosynthesis; chorismate from D-erythrose 4-phosphate and phosphoenolpyruvate: step 6/7. Catalyzes the transfer of the enolpyruvyl moiety of phosphoenolpyruvate (PEP) to the 5-hydroxyl of shikimate-3-phosphate (S3P) to produce enolpyruvyl shikimate-3-phosphate and inorganic phosphate. The sequence is that of 3-phosphoshikimate 1-carboxyvinyltransferase from Shigella flexneri serotype 5b (strain 8401).